The primary structure comprises 1116 residues: Auxin response factor 21 (1116 aa).

The segment at residues 132 to 234 (FCKTLTASDT…QLLLGIRRAN (103 aa)) is a DNA-binding region (TF-B3). The tract at residues 763 to 812 (KTDDVPSTSTSPSTNSNPVLLQSIPSSSKNQSLTTAGKTSQSSVVLGPTI) is disordered. Residues 768 to 780 (PSTSTSPSTNSNP) are compositionally biased toward low complexity. Polar residues predominate over residues 781–806 (VLLQSIPSSSKNQSLTTAGKTSQSSV). A PB1 domain is found at 998–1082 (RTYTKVHKRG…RCIRILSPQE (85 aa)).

The protein belongs to the ARF family. As to quaternary structure, homodimers and heterodimers. In terms of tissue distribution, expressed in roots, culms, leaves and young panicles.

The protein resides in the nucleus. Functionally, auxin response factors (ARFs) are transcriptional factors that bind specifically to the DNA sequence 5'-TGTCTC-3' found in the auxin-responsive promoter elements (AuxREs). This is Auxin response factor 21 (ARF21) from Oryza sativa subsp. japonica (Rice).